Here is a 357-residue protein sequence, read N- to C-terminus: Quinolinate synthase (357 aa).

The iminosuccinate site is built by histidine 50 and serine 71. [4Fe-4S] cluster is bound at residue cysteine 116. Residues 142–144 and serine 159 each bind iminosuccinate; that span reads YAN. Residue cysteine 203 coordinates [4Fe-4S] cluster. Iminosuccinate is bound by residues 229-231 and threonine 246; that span reads HPE. Residue cysteine 300 coordinates [4Fe-4S] cluster.

Belongs to the quinolinate synthase family. Type 1 subfamily. Requires [4Fe-4S] cluster as cofactor.

It localises to the cytoplasm. The catalysed reaction is iminosuccinate + dihydroxyacetone phosphate = quinolinate + phosphate + 2 H2O + H(+). It participates in cofactor biosynthesis; NAD(+) biosynthesis; quinolinate from iminoaspartate: step 1/1. Its function is as follows. Catalyzes the condensation of iminoaspartate with dihydroxyacetone phosphate to form quinolinate. This is Quinolinate synthase from Shewanella sp. (strain MR-4).